The primary structure comprises 64 residues: Hypoxia-inducible lipid droplet-associated protein (64 aa).

The required for targeting to lipid droplets stretch occupies residues 1 to 37; it reads MKFMLNLYVLGIMLTLLSIFVRVMESLGGLLESPLPG. A helical membrane pass occupies residues 7-24; that stretch reads LYVLGIMLTLLSIFVRVM. Residues 42–51 show a composition bias toward polar residues; it reads TRGQLANTQP. Residues 42 to 64 form a disordered region; it reads TRGQLANTQPPKGLPDHPSRGVQ. A compositionally biased stretch (basic and acidic residues) spans 55–64; it reads LPDHPSRGVQ.

Its subcellular location is the lipid droplet. It is found in the secreted. The protein resides in the membrane. Increases intracellular lipid accumulation. Stimulates expression of cytokines including IL6, MIF and VEGFA. Enhances cell growth and proliferation. The chain is Hypoxia-inducible lipid droplet-associated protein (Hilpda) from Mus musculus (Mouse).